The primary structure comprises 2157 residues: Mediator of RNA polymerase II transcription subunit 12-like protein (2157 aa).

Positions 1–31 are disordered; the sequence is MAAFGLLSYEQRPLKRPRLGPPDVYPQDPKQ. Thr462 carries the post-translational modification Phosphothreonine. Residues 1437 to 1456 are compositionally biased toward basic and acidic residues; sequence ELEKGQHLGSSSKKERDRQK. Disordered stretches follow at residues 1437–1461, 1724–1807, and 2040–2157; these read ELEKGQHLGSSSKKERDRQKQKSMS, RSYY…SQMT, and IDAV…PSHF. Basic residues predominate over residues 1771–1780; it reads TKGRKRKTKS. Composition is skewed to low complexity over residues 2063 to 2076, 2083 to 2101, and 2116 to 2136; these read PRQQQVRQQQRLLQ, QQPQQAPQPQQPSQTQSQA, and RQGLQQTQQQQQTAALVRQLQ. Positions 2137–2148 are enriched in polar residues; the sequence is KQLSSNQPQQGV.

This sequence belongs to the Mediator complex subunit 12 family. As to quaternary structure, may be a component of the Mediator complex, which is known to be composed of MED1, MED4, MED6, MED7, MED8, MED9, MED10, MED11, MED12, MED13, MED13L, MED14, MED15, MED16, MED17, MED18, MED19, MED20, MED21, MED22, MED23, MED24, MED25, MED26, MED27, MED29, MED30, MED31, CCNC, CDK8 and CDC2L6/CDK11. The MED12, MED13, CCNC and CDK8 subunits form a distinct module termed the CDK8 module. Mediator containing the CDK8 module is less active than Mediator lacking this module in supporting transcriptional activation. Individual preparations of the Mediator complex lacking one or more distinct subunits have been variously termed ARC, CRSP, DRIP, PC2, SMCC and TRAP.

The protein resides in the nucleus. May be a component of the Mediator complex, a coactivator involved in the regulated transcription of nearly all RNA polymerase II-dependent genes. Mediator functions as a bridge to convey information from gene-specific regulatory proteins to the basal RNA polymerase II transcription machinery. Mediator is recruited to promoters by direct interactions with regulatory proteins and serves as a scaffold for the assembly of a functional preinitiation complex with RNA polymerase II and the general transcription factors. The chain is Mediator of RNA polymerase II transcription subunit 12-like protein (Med12l) from Mus musculus (Mouse).